Reading from the N-terminus, the 216-residue chain is Pyrophosphatase PpaX (216 aa).

The Nucleophile role is filled by Asp-9.

It belongs to the HAD-like hydrolase superfamily. PpaX family. It depends on Mg(2+) as a cofactor.

The catalysed reaction is diphosphate + H2O = 2 phosphate + H(+). In terms of biological role, hydrolyzes pyrophosphate formed during P-Ser-HPr dephosphorylation by HPrK/P. Might play a role in controlling the intracellular pyrophosphate pool. This chain is Pyrophosphatase PpaX, found in Bacillus anthracis (strain A0248).